A 172-amino-acid polypeptide reads, in one-letter code: Putative B3 domain-containing protein At1g05615 (172 aa).

The TF-B3 DNA-binding region spans 69 to 169 (VDEGKIIDFE…NLAMVPLTPT (101 aa)).

The protein localises to the nucleus. The protein is Putative B3 domain-containing protein At1g05615 of Arabidopsis thaliana (Mouse-ear cress).